We begin with the raw amino-acid sequence, 151 residues long: Ribosome maturation factor RimP (151 aa).

This sequence belongs to the RimP family.

Its subcellular location is the cytoplasm. Required for maturation of 30S ribosomal subunits. This is Ribosome maturation factor RimP from Aliivibrio salmonicida (strain LFI1238) (Vibrio salmonicida (strain LFI1238)).